Consider the following 554-residue polypeptide: Glutamine--tRNA ligase (554 aa).

A 'HIGH' region motif is present at residues 34-44; the sequence is PEPNGYLHIGH. ATP contacts are provided by residues 35–37 and 41–47; these read EPN and HIGHAKS. L-glutamine-binding residues include D67 and Y212. Residues T231, 261-262, and 269-271 contribute to the ATP site; these read RL and MSK. The 'KMSKS' region signature appears at 268 to 272; it reads VMSKR.

It belongs to the class-I aminoacyl-tRNA synthetase family. As to quaternary structure, monomer.

It is found in the cytoplasm. The catalysed reaction is tRNA(Gln) + L-glutamine + ATP = L-glutaminyl-tRNA(Gln) + AMP + diphosphate. The polypeptide is Glutamine--tRNA ligase (Shigella boydii serotype 4 (strain Sb227)).